A 30-amino-acid polypeptide reads, in one-letter code: Glutathione S-transferase (30 aa).

Belongs to the GST superfamily. In terms of assembly, monomer and homodimer.

The protein resides in the cytoplasm. It catalyses the reaction RX + glutathione = an S-substituted glutathione + a halide anion + H(+). In terms of biological role, conjugation of reduced glutathione to a wide number of exogenous and endogenous hydrophobic electrophiles. This chain is Glutathione S-transferase, found in Pseudomonas fluorescens.